The sequence spans 306 residues: Non-specific ribonucleoside hydrolase RihC (306 aa).

Residue histidine 235 is part of the active site.

The protein belongs to the IUNH family. RihC subfamily.

Its function is as follows. Hydrolyzes both purine and pyrimidine ribonucleosides with a broad-substrate specificity. The chain is Non-specific ribonucleoside hydrolase RihC from Salmonella heidelberg (strain SL476).